Consider the following 365-residue polypeptide: Chorismate synthase (365 aa).

Arg48 is a binding site for NADP(+). FMN is bound by residues 130 to 132 (RSS), 242 to 243 (NA), Gly290, 305 to 309 (KPTSS), and Arg331.

The protein belongs to the chorismate synthase family. Homotetramer. FMNH2 is required as a cofactor.

It catalyses the reaction 5-O-(1-carboxyvinyl)-3-phosphoshikimate = chorismate + phosphate. It participates in metabolic intermediate biosynthesis; chorismate biosynthesis; chorismate from D-erythrose 4-phosphate and phosphoenolpyruvate: step 7/7. In terms of biological role, catalyzes the anti-1,4-elimination of the C-3 phosphate and the C-6 proR hydrogen from 5-enolpyruvylshikimate-3-phosphate (EPSP) to yield chorismate, which is the branch point compound that serves as the starting substrate for the three terminal pathways of aromatic amino acid biosynthesis. This reaction introduces a second double bond into the aromatic ring system. The chain is Chorismate synthase from Erythrobacter litoralis (strain HTCC2594).